A 26-amino-acid chain; its full sequence is M-lycotoxin-Ls2a (26 aa).

Expressed by the venom gland.

It localises to the secreted. Its subcellular location is the target cell membrane. Functionally, forms pore that permeabilize the cell membrane. Promotes efflux of calcium from synaptosomes, causes hemolysis, and dissipates voltage gradients across muscle membrane. Potently inhibits the growth of bacteria and yeast. May function both in the prey capture strategy as well as protection from infectious organisms arising from prey ingestion. In Lycosa singoriensis (Wolf spider), this protein is M-lycotoxin-Ls2a.